The chain runs to 191 residues: Peptidyl-tRNA hydrolase (191 aa).

Y14 contributes to the tRNA binding site. Catalysis depends on H19, which acts as the Proton acceptor. The tRNA site is built by F64, N66, and N113.

Belongs to the PTH family. Monomer.

The protein localises to the cytoplasm. The enzyme catalyses an N-acyl-L-alpha-aminoacyl-tRNA + H2O = an N-acyl-L-amino acid + a tRNA + H(+). In terms of biological role, hydrolyzes ribosome-free peptidyl-tRNAs (with 1 or more amino acids incorporated), which drop off the ribosome during protein synthesis, or as a result of ribosome stalling. Functionally, catalyzes the release of premature peptidyl moieties from peptidyl-tRNA molecules trapped in stalled 50S ribosomal subunits, and thus maintains levels of free tRNAs and 50S ribosomes. The protein is Peptidyl-tRNA hydrolase of Fusobacterium nucleatum subsp. nucleatum (strain ATCC 25586 / DSM 15643 / BCRC 10681 / CIP 101130 / JCM 8532 / KCTC 2640 / LMG 13131 / VPI 4355).